Reading from the N-terminus, the 317-residue chain is DNA repair nuclease/redox regulator APEX1 (317 aa).

Residues 1-58 (MPKRGKKAAADDGEEPKSEPETKKSKGAAKKTEKEAAGEGPVLYEDPPDQKTSPSGKS) form a disordered region. The necessary for interaction with YBX1, binding to RNA, association together with NPM1 to rRNA, endoribonuclease activity on abasic RNA and localization in the nucleoli stretch occupies residues 2–32 (PKRGKKAAADDGEEPKSEPETKKSKGAAKKT). An N6-acetyllysine; by EP300 mark is found at Lys-6 and Lys-7. The Nuclear localization signal (NLS) motif lies at 8-12 (AAADD). The segment covering 15-37 (EPKSEPETKKSKGAAKKTEKEAA) has biased composition (basic and acidic residues). Ser-18 carries the phosphoserine modification. Positions 22–32 (TKKSKGAAKKT) are necessary for interaction with NPM1 and for efficient rRNA binding. 4 positions are modified to N6-acetyllysine: Lys-26, Lys-30, Lys-31, and Lys-34. Ser-53 bears the Phosphoserine mark. The Nuclear export signal (NES) motif lies at 63-79 (ICSWNVDGLRAWIKKKG). At Cys-64 the chain carries S-nitrosocysteine; alternate. A disulfide bridge connects residues Cys-64 and Cys-92. Asp-69 is a binding site for Mg(2+). S-nitrosocysteine; alternate is present on Cys-92. Glu-95 serves as a coordination point for Mg(2+). Tyr-170 is an active-site residue. Lys-196 is subject to N6-acetyllysine. Residues Asp-209 and Asn-211 each contribute to the Mg(2+) site. Asp-209 serves as the catalytic Proton donor/acceptor. Residue Thr-232 is modified to Phosphothreonine; by CDK5. Positions 288–317 (HSLLPALCDSKIRSKALGSDHCPITLYLAL) are mitochondrial targeting sequence (MTS). Asp-307 serves as a coordination point for Mg(2+). The residue at position 309 (Cys-309) is an S-nitrosocysteine.

Belongs to the DNA repair enzymes AP/ExoA family. Monomer. Homodimer; disulfide-linked. Component of the SET complex, composed of at least APEX1, SET, ANP32A, HMGB2, NME1 and TREX1. Associates with the dimer XRCC5/XRCC6 in a DNA-dependent manner. Interacts with SIRT1; the interaction is increased in the context of genotoxic stress. Interacts with HDAC1, HDAC2 and HDAC3; the interactions are not dependent on the APEX1 acetylation status. Interacts with XRCC1; the interaction is induced by SIRT1 and increased with the APEX1 acetylated form. Interacts with NPM1 (via N-terminal domain); the interaction is RNA-dependent and decreases in hydrogen peroxide-damaged cells. Interacts (via N-terminus) with YBX1 (via C-terminus); the interaction is increased in presence of APEX1 acetylated at Lys-6 and Lys-7. Interacts with HNRNPL; the interaction is DNA-dependent. Interacts (via N-terminus) with KPNA1 and KPNA2. Interacts with TXN; the interaction stimulates the FOS/JUN AP-1 complex DNA-binding activity in a redox-dependent manner. Interacts with GZMA, KRT8, MDM2, POLB, PRDX6, PRPF19, RPLP0, TOMM20 and WDR77. Binds to CDK5. It depends on Mg(2+) as a cofactor. Mn(2+) is required as a cofactor. In terms of processing, phosphorylated. Phosphorylation by kinase PKC or casein kinase CK2 results in enhanced redox activity that stimulates binding of the FOS/JUN AP-1 complex to its cognate binding site. AP-endodeoxyribonuclease activity is not affected by CK2-mediated phosphorylation. Phosphorylation of Thr-232 by CDK5 in response to MPP(+)/MPTP (1-methyl-4-phenylpyridinium) reduces AP-endodeoxyribonuclease activity resulting in accumulation of DNA damage and contributing to neuronal death. Post-translationally, acetylated on Lys-6 and Lys-7. Acetylation is increased by the transcriptional coactivator EP300 acetyltransferase, genotoxic agents like H(2)O(2) and methyl methanesulfonate (MMS). Acetylation increases its binding affinity to the negative calcium response element (nCaRE) DNA promoter. The acetylated form induces a stronger binding of YBX1 to the Y-box sequence in the MDR1 promoter than the unacetylated form. Deacetylated on lysines. Lys-6 and Lys-7 are deacetylated by SIRT1. Cleaved at Lys-30 by granzyme A to create the mitochondrial form; leading in reduction of binding to DNA, AP endodeoxyribonuclease activity, redox activation of transcription factors and to enhanced cell death. Cleaved by granzyme K; leading to intracellular ROS accumulation and enhanced cell death after oxidative stress. In terms of processing, cys-64 and Cys-92 are nitrosylated in response to nitric oxide (NO) and lead to the exposure of the nuclear export signal (NES). Post-translationally, ubiquitinated by MDM2; leading to translocation to the cytoplasm and proteasomal degradation. Expressed in both resting and stimulated B cells stimulated to switch (at protein level).

It is found in the nucleus. Its subcellular location is the nucleolus. It localises to the nucleus speckle. The protein resides in the endoplasmic reticulum. The protein localises to the cytoplasm. It is found in the mitochondrion. It catalyses the reaction a deoxyribonucleotide-2'-deoxyribose-5'-monophosphate-DNA + H2O = a 5'-end 2'-deoxyribose-5'-monophosphate-DNA + a 3'-end 2'-deoxyribonucleotide-DNA + H(+). It carries out the reaction Exonucleolytic cleavage in the 3'- to 5'-direction to yield nucleoside 5'-phosphates.. The catalysed reaction is a 3'-end 2'-deoxyribonucleotide-3'-phosphoglycolate-DNA + H2O = 2-phosphoglycolate + a 3'-end 2'-deoxyribonucleotide-DNA + H(+). The enzyme catalyses a 3'-end 2'-deoxyribonucleotide-8-oxoguanine-DNA + H2O = 8-oxo-dGMP + a 3'-end 2'-deoxyribonucleotide-DNA + H(+). Its activity is regulated as follows. NPM1 stimulates endodeoxyribonuclease activity on double-stranded DNA with AP sites, but inhibits endoribonuclease activity on single-stranded RNA containing AP sites. Multifunctional protein that plays a central role in the cellular response to oxidative stress. The two major activities of APEX1 are DNA repair and redox regulation of transcriptional factors. Functions as an apurinic/apyrimidinic (AP) endodeoxyribonuclease in the base excision repair (BER) pathway of DNA lesions induced by oxidative and alkylating agents. Initiates repair of AP sites in DNA by catalyzing hydrolytic incision of the phosphodiester backbone immediately adjacent to the damage, generating a single-strand break with 5'-deoxyribose phosphate and 3'-hydroxyl ends. Also incises at AP sites in the DNA strand of DNA/RNA hybrids, single-stranded DNA regions of R-loop structures, and single-stranded RNA molecules. Operates at switch sites of immunoglobulin (Ig) constant regions where it mediates Ig isotype class switch recombination. Processes AP sites induced by successive action of AICDA and UNG. Generates staggered nicks in opposite DNA strands resulting in the formation of double-strand DNA breaks that are finally resolved via non-homologous end joining repair pathway. Has 3'-5' exodeoxyribonuclease activity on mismatched deoxyribonucleotides at the 3' termini of nicked or gapped DNA molecules during short-patch BER. Possesses DNA 3' phosphodiesterase activity capable of removing lesions (such as phosphoglycolate and 8-oxoguanine) blocking the 3' side of DNA strand breaks. Also acts as an endoribonuclease involved in the control of single-stranded RNA metabolism. Plays a role in regulating MYC mRNA turnover by preferentially cleaving in between UA and CA dinucleotides of the MYC coding region determinant (CRD). In association with NMD1, plays a role in the rRNA quality control process during cell cycle progression. Acts as a loading factor for POLB onto non-incised AP sites in DNA and stimulates the 5'-terminal deoxyribose 5'-phosphate (dRp) excision activity of POLB. Exerts reversible nuclear redox activity to regulate DNA binding affinity and transcriptional activity of transcriptional factors by controlling the redox status of their DNA-binding domain, such as the FOS/JUN AP-1 complex after exposure to IR. Involved in calcium-dependent down-regulation of parathyroid hormone (PTH) expression by binding to negative calcium response elements (nCaREs). Together with HNRNPL or the dimer XRCC5/XRCC6, associates with nCaRE, acting as an activator of transcriptional repression. May also play a role in the epigenetic regulation of gene expression by participating in DNA demethylation. Stimulates the YBX1-mediated MDR1 promoter activity, when acetylated at Lys-6 and Lys-7, leading to drug resistance. Plays a role in protection from granzyme-mediated cellular repair leading to cell death. Binds DNA and RNA. Associates, together with YBX1, on the MDR1 promoter. Together with NPM1, associates with rRNA. This is DNA repair nuclease/redox regulator APEX1 (Apex1) from Mus musculus (Mouse).